Reading from the N-terminus, the 289-residue chain is Glycine--tRNA ligase alpha subunit (289 aa).

This sequence belongs to the class-II aminoacyl-tRNA synthetase family. As to quaternary structure, tetramer of two alpha and two beta subunits.

It is found in the cytoplasm. It catalyses the reaction tRNA(Gly) + glycine + ATP = glycyl-tRNA(Gly) + AMP + diphosphate. The chain is Glycine--tRNA ligase alpha subunit from Rickettsia felis (strain ATCC VR-1525 / URRWXCal2) (Rickettsia azadi).